The sequence spans 260 residues: Proansamycin X synthase (260 aa).

Residue Cys-73 is the Acyl-thioester intermediate of the active site. Active-site residues include His-111 and Asp-126.

The protein belongs to the arylamine N-acetyltransferase family.

The protein operates within antibiotic biosynthesis; rifamycin B biosynthesis. Functionally, catalyzes the release of the completed linear polyketide from the rif PKS by forming an intramolecular amide bond, in this way terminating polyketide assembly and forming the macrocyclic compound proansamycin X, an intermediate in the rifamycin B biosynthesis. The sequence is that of Proansamycin X synthase (rifF) from Amycolatopsis mediterranei (strain S699) (Nocardia mediterranei).